The following is a 326-amino-acid chain: DNA repair protein RAD51 homolog 4 (326 aa).

Residues 1–83 (MGVLRAGLCP…ELKTSTAILS (83 aa)) are preferentially binds ssDNA. ATP is bound at residue 107 to 114 (GAPGSGKT).

This sequence belongs to the RecA family. RAD51 subfamily. As to quaternary structure, part of the BCDX2 complex consisting of RAD51B, RAD51C, RAD51D and XRCC2; the complex has a ring-like structure arranged into a flat disc around a central channel. In the absence of DNA, the BCDX2 subcomplex XRCC2:RAD51D formed a multimeric ring structure; in the presence of single-stranded DNA it formed a filamentous structure with the ssDNA. Interacts with SWSAP1 and ZSWIM7; involved in homologous recombination repair. Interacts with BLM; required for stimulation of BLM activity by the BCDX2 subcomplex XRCC2:RAD51D.

The protein localises to the nucleus. Its function is as follows. Involved in the homologous recombination repair (HRR) pathway of double-stranded DNA breaks arising during DNA replication or induced by DNA-damaging agents. Bind to single-stranded DNA (ssDNA) and has DNA-dependent ATPase activity. Part of the RAD51 paralog protein complex BCDX2 which acts in the BRCA1-BRCA2-dependent HR pathway. Upon DNA damage, BCDX2 acts downstream of BRCA2 recruitment and upstream of RAD51 recruitment. BCDX2 binds predominantly to the intersection of the four duplex arms of the Holliday junction and to junction of replication forks. The BCDX2 complex was originally reported to bind single-stranded DNA, single-stranded gaps in duplex DNA and specifically to nicks in duplex DNA. Involved in telomere maintenance. The BCDX2 subcomplex XRCC2:RAD51D can stimulate Holliday junction resolution by BLM. This is DNA repair protein RAD51 homolog 4 (RAD51D) from Bos taurus (Bovine).